The following is a 337-amino-acid chain: Heat-inducible transcription repressor HrcA (337 aa).

Belongs to the HrcA family.

Its function is as follows. Negative regulator of class I heat shock genes (grpE-dnaK-dnaJ and groELS operons). Prevents heat-shock induction of these operons. The polypeptide is Heat-inducible transcription repressor HrcA (Arthrobacter sp. (strain FB24)).